Consider the following 199-residue polypeptide: Transgelin-3 (199 aa).

Positions Ala24–Ala136 constitute a Calponin-homology (CH) domain. A Phosphoserine modification is found at Ser163. Residues Ile174–Met199 form a Calponin-like repeat. Residues Met178–Gly188 show a composition bias toward polar residues. The tract at residues Met178–Met199 is disordered.

It belongs to the calponin family.

The chain is Transgelin-3 (TAGLN3) from Bos taurus (Bovine).